The primary structure comprises 218 residues: Thiopurine S-methyltransferase (218 aa).

S-adenosyl-L-methionine is bound by residues W10, L45, E66, and R123.

It belongs to the class I-like SAM-binding methyltransferase superfamily. TPMT family.

Its subcellular location is the cytoplasm. The enzyme catalyses S-adenosyl-L-methionine + a thiopurine = S-adenosyl-L-homocysteine + a thiopurine S-methylether.. The polypeptide is Thiopurine S-methyltransferase (Shewanella sp. (strain MR-4)).